A 271-amino-acid polypeptide reads, in one-letter code: Phosphate import ATP-binding protein PstB (271 aa).

The 242-residue stretch at Phe25–Ile266 folds into the ABC transporter domain. Gly57–Ser64 is an ATP binding site.

Belongs to the ABC transporter superfamily. Phosphate importer (TC 3.A.1.7) family. In terms of assembly, the complex is composed of two ATP-binding proteins (PstB), two transmembrane proteins (PstC and PstA) and a solute-binding protein (PstS).

The protein resides in the cell membrane. The enzyme catalyses phosphate(out) + ATP + H2O = ADP + 2 phosphate(in) + H(+). In terms of biological role, part of the ABC transporter complex PstSACB involved in phosphate import. Responsible for energy coupling to the transport system. This chain is Phosphate import ATP-binding protein PstB, found in Bacillus cereus (strain ATCC 14579 / DSM 31 / CCUG 7414 / JCM 2152 / NBRC 15305 / NCIMB 9373 / NCTC 2599 / NRRL B-3711).